We begin with the raw amino-acid sequence, 62 residues long: UPF0434 protein Smed_3047 (62 aa).

The protein belongs to the UPF0434 family.

This Sinorhizobium medicae (strain WSM419) (Ensifer medicae) protein is UPF0434 protein Smed_3047.